The primary structure comprises 132 residues: T-cell receptor alpha chain V region CTL-F3 (132 aa).

A signal peptide spans 1 to 22 (MNMRPDTCSVLVLLLMLRRNNG). A v segment region spans residues 23–114 (DSVTQTEGLV…DSALYYCALS (92 aa)). N-linked (GlcNAc...) asparagine glycosylation occurs at asparagine 43. A disulfide bridge links cysteine 44 with cysteine 111. The j segment stretch occupies residues 115–132 (NAGAKLTFGGGTRLTVRP).

The chain is T-cell receptor alpha chain V region CTL-F3 from Mus musculus (Mouse).